Consider the following 1294-residue polypeptide: Disease resistance protein L6 (1294 aa).

Positions 1-29 (MSYLREVATAVALLLPFILLNKFWRPNSK) are cleaved as a signal peptide. The tract at residues 34-54 (NDDDDSTSEVDAISDSTNPSG) is disordered. The 163-residue stretch at 59-221 (VEYEVFLSFR…AIADKVSADI (163 aa)) folds into the TIR domain. Residues 68 to 73 (RGPDTR) and Gly101 contribute to the NAD(+) site. The active site involves Glu135. Positions 241–480 (DDHITAVLEK…VYDRLKISYD (240 aa)) constitute an NB-ARC domain. LRR repeat units lie at residues 246 to 268 (AVLEKLSLDSENVTMVGLYGMGG), 468 to 492 (LDEVYDRLKISYDALNPEAKEIFLD), 604 to 625 (LSELRYLHAREAMLTGDFNNLL), 626 to 650 (PNLKWLELPFYKHGEDDPPLTNYTM), 904 to 928 (LENLTSLEVNDIFQTLGGDLDGLQG), 1012 to 1039 (FPMLKKLDLAVANITKEEDLDAIGSLEE), 1063 to 1085 (LQKLTTLVVKVPSLREIEGLEEL), 1086 to 1109 (KSLQDLYLEGCTSLGRLPLEKLKE), 1179 to 1203 (LEELDSLELTLDDTCSSIERISFLS), 1205 to 1229 (LQKLTTLIVEVPSLREIEGLAELKS), and 1254 to 1278 (LKNLNVLDIQGCKSLSVDHLSALKT).

It belongs to the disease resistance TIR-NB-LRR family. Homooligomer; homooligomerization is required for activity.

The catalysed reaction is NAD(+) + H2O = ADP-D-ribose + nicotinamide + H(+). It carries out the reaction NADP(+) + H2O = ADP-D-ribose 2'-phosphate + nicotinamide + H(+). The enzyme catalyses NAD(+) = 2'cADPR + nicotinamide + H(+). TIR-NB-LRR receptor-like protein that confers resistance to the flax rust phytopathogenic fungus (M.lini). An NAD(+) hydrolase (NADase): in response to activation, catalyzes cleavage of NAD(+) into ADP-D-ribose (ADPR) and nicotinamide; NAD(+) cleavage triggering a defense system that promotes cell death. Also able to hydrolyze NADP(+), but not other NAD(+)-related molecules. Makes small amounts of 2' cyclic ADPR (2'cADPR). The protein is Disease resistance protein L6 of Linum usitatissimum (Flax).